The following is a 362-amino-acid chain: Probable aromatic amino acid hydroxylase (362 aa).

Positions 200 and 205 each coordinate Fe cation.

It belongs to the biopterin-dependent aromatic amino acid hydroxylase family. It depends on Fe(2+) as a cofactor.

In Chlamydia pneumoniae (Chlamydophila pneumoniae), this protein is Probable aromatic amino acid hydroxylase.